We begin with the raw amino-acid sequence, 876 residues long: Alanine--tRNA ligase (876 aa).

Zn(2+) contacts are provided by H564, H568, C666, and H670.

It belongs to the class-II aminoacyl-tRNA synthetase family. In terms of assembly, homotetramer. The cofactor is Zn(2+).

The protein localises to the cytoplasm. The catalysed reaction is tRNA(Ala) + L-alanine + ATP = L-alanyl-tRNA(Ala) + AMP + diphosphate. Functionally, catalyzes the attachment of alanine to tRNA(Ala) in a two-step reaction: alanine is first activated by ATP to form Ala-AMP and then transferred to the acceptor end of tRNA(Ala). Also edits incorrectly charged Ser-tRNA(Ala) and Gly-tRNA(Ala) via its editing domain. This is Alanine--tRNA ligase from Salmonella choleraesuis (strain SC-B67).